The following is a 263-amino-acid chain: 5'-nucleotidase SurE (263 aa).

Residues D8, D9, S40, and N98 each coordinate a divalent metal cation.

It belongs to the SurE nucleotidase family. A divalent metal cation serves as cofactor.

The protein localises to the cytoplasm. It carries out the reaction a ribonucleoside 5'-phosphate + H2O = a ribonucleoside + phosphate. In terms of biological role, nucleotidase that shows phosphatase activity on nucleoside 5'-monophosphates. This is 5'-nucleotidase SurE from Gloeobacter violaceus (strain ATCC 29082 / PCC 7421).